Here is a 626-residue protein sequence, read N- to C-terminus: Chaperone protein HtpG (626 aa).

The tract at residues 1-339 is a; substrate-binding; the sequence is MSQNQETRGF…SNDLPLNVSR (339 aa). Positions 340–555 are b; that stretch reads EILQDNKITA…NDQMTTQMAK (216 aa). Residues 556–626 are c; it reads LFAAAGQPVP…FIKRINKLLG (71 aa).

Belongs to the heat shock protein 90 family. Homodimer.

It localises to the cytoplasm. Functionally, molecular chaperone. Has ATPase activity. The chain is Chaperone protein HtpG from Haemophilus influenzae (strain PittEE).